A 219-amino-acid polypeptide reads, in one-letter code: Ran-specific GTPase-activating protein 1 (219 aa).

Composition is skewed to basic and acidic residues over residues 1–12, 33–45, and 57–72; these read MAEVERKEEQAK, AVGD…EAKK, and PRKD…DNID. The disordered stretch occupies residues 1 to 72; sequence MAEVERKEEQ…KGGEERDNID (72 aa). In terms of domain architecture, RanBD1 spans 70 to 210; it reads NIDAAEVVEK…YDLGRAHNEK (141 aa).

Belongs to the RANBP1 family.

Its subcellular location is the cytoplasm. The protein localises to the nucleus. Functionally, important for the export of protein containing nuclear export signal (NES) out of the nucleus. This Encephalitozoon cuniculi (strain GB-M1) (Microsporidian parasite) protein is Ran-specific GTPase-activating protein 1 (YRB1).